We begin with the raw amino-acid sequence, 774 residues long: 5-methyltetrahydropteroyltriglutamate--homocysteine methyltransferase (774 aa).

5-methyltetrahydropteroyltri-L-glutamate is bound by residues 15 to 18 (RELK) and K116. L-homocysteine is bound by residues 445 to 447 (IGS) and E498. L-methionine is bound by residues 445–447 (IGS) and E498. Residues 529-530 (RC) and W575 contribute to the 5-methyltetrahydropteroyltri-L-glutamate site. Residue D613 coordinates L-homocysteine. D613 is an L-methionine binding site. E619 is a 5-methyltetrahydropteroyltri-L-glutamate binding site. Residues H655, C657, and E679 each contribute to the Zn(2+) site. H708 (proton donor) is an active-site residue. Position 740 (C740) interacts with Zn(2+).

Belongs to the vitamin-B12 independent methionine synthase family. Zn(2+) serves as cofactor.

The enzyme catalyses 5-methyltetrahydropteroyltri-L-glutamate + L-homocysteine = tetrahydropteroyltri-L-glutamate + L-methionine. It participates in amino-acid biosynthesis; L-methionine biosynthesis via de novo pathway; L-methionine from L-homocysteine (MetE route): step 1/1. Functionally, catalyzes the transfer of a methyl group from 5-methyltetrahydrofolate to homocysteine resulting in methionine formation. The protein is 5-methyltetrahydropteroyltriglutamate--homocysteine methyltransferase of Flavobacterium johnsoniae (strain ATCC 17061 / DSM 2064 / JCM 8514 / BCRC 14874 / CCUG 350202 / NBRC 14942 / NCIMB 11054 / UW101) (Cytophaga johnsonae).